We begin with the raw amino-acid sequence, 506 residues long: GMP synthase [glutamine-hydrolyzing] (506 aa).

Residues 3 to 188 (GFVILDFGSQ…AQGMCKAPAD (186 aa)) enclose the Glutamine amidotransferase type-1 domain. Catalysis depends on cysteine 80, which acts as the Nucleophile. Active-site residues include histidine 162 and glutamate 164. One can recognise a GMPS ATP-PPase domain in the interval 189-381 (WDAPHIKDIL…LGLPKEMLWR (193 aa)). ATP is bound at residue 217-223 (SGGVDST).

Homodimer.

The enzyme catalyses XMP + L-glutamine + ATP + H2O = GMP + L-glutamate + AMP + diphosphate + 2 H(+). The protein operates within purine metabolism; GMP biosynthesis; GMP from XMP (L-Gln route): step 1/1. Functionally, catalyzes the synthesis of GMP from XMP. This is GMP synthase [glutamine-hydrolyzing] from Bdellovibrio bacteriovorus (strain ATCC 15356 / DSM 50701 / NCIMB 9529 / HD100).